Consider the following 358-residue polypeptide: Protein RecA (358 aa).

An ATP-binding site is contributed by 66-73 (GPESSGKT).

The protein belongs to the RecA family.

Its subcellular location is the cytoplasm. Functionally, can catalyze the hydrolysis of ATP in the presence of single-stranded DNA, the ATP-dependent uptake of single-stranded DNA by duplex DNA, and the ATP-dependent hybridization of homologous single-stranded DNAs. It interacts with LexA causing its activation and leading to its autocatalytic cleavage. The polypeptide is Protein RecA (Herpetosiphon aurantiacus (strain ATCC 23779 / DSM 785 / 114-95)).